A 258-amino-acid polypeptide reads, in one-letter code: Ditrans,polycis-undecaprenyl-diphosphate synthase ((2E,6E)-farnesyl-diphosphate specific) (258 aa).

The active site involves Asp24. Asp24 contacts Mg(2+). Substrate is bound by residues 25-28, Trp29, Arg37, His41, and 69-71; these read GNGR and SSE. Asn72 acts as the Proton acceptor in catalysis. Substrate is bound by residues Trp73, Arg75, Arg192, and 198-200; that span reads RIS. Glu211 provides a ligand contact to Mg(2+).

This sequence belongs to the UPP synthase family. Homodimer. Requires Mg(2+) as cofactor.

It carries out the reaction 8 isopentenyl diphosphate + (2E,6E)-farnesyl diphosphate = di-trans,octa-cis-undecaprenyl diphosphate + 8 diphosphate. Catalyzes the sequential condensation of isopentenyl diphosphate (IPP) with (2E,6E)-farnesyl diphosphate (E,E-FPP) to yield (2Z,6Z,10Z,14Z,18Z,22Z,26Z,30Z,34E,38E)-undecaprenyl diphosphate (di-trans,octa-cis-UPP). UPP is the precursor of glycosyl carrier lipid in the biosynthesis of bacterial cell wall polysaccharide components such as peptidoglycan and lipopolysaccharide. This Xanthomonas campestris pv. campestris (strain ATCC 33913 / DSM 3586 / NCPPB 528 / LMG 568 / P 25) protein is Ditrans,polycis-undecaprenyl-diphosphate synthase ((2E,6E)-farnesyl-diphosphate specific).